The primary structure comprises 430 residues: 3-phosphoshikimate 1-carboxyvinyltransferase (430 aa).

3 residues coordinate 3-phosphoshikimate: lysine 21, serine 22, and arginine 26. Phosphoenolpyruvate is bound at residue lysine 21. Positions 94 and 122 each coordinate phosphoenolpyruvate. 3-phosphoshikimate is bound by residues serine 167, glutamine 169, aspartate 317, and lysine 344. Glutamine 169 provides a ligand contact to phosphoenolpyruvate. Aspartate 317 functions as the Proton acceptor in the catalytic mechanism. Phosphoenolpyruvate contacts are provided by arginine 348 and arginine 390.

Belongs to the EPSP synthase family. As to quaternary structure, monomer.

It localises to the cytoplasm. It catalyses the reaction 3-phosphoshikimate + phosphoenolpyruvate = 5-O-(1-carboxyvinyl)-3-phosphoshikimate + phosphate. It participates in metabolic intermediate biosynthesis; chorismate biosynthesis; chorismate from D-erythrose 4-phosphate and phosphoenolpyruvate: step 6/7. Its function is as follows. Catalyzes the transfer of the enolpyruvyl moiety of phosphoenolpyruvate (PEP) to the 5-hydroxyl of shikimate-3-phosphate (S3P) to produce enolpyruvyl shikimate-3-phosphate and inorganic phosphate. In Thermodesulfovibrio yellowstonii (strain ATCC 51303 / DSM 11347 / YP87), this protein is 3-phosphoshikimate 1-carboxyvinyltransferase.